The sequence spans 588 residues: Adenine deaminase (588 aa).

The protein belongs to the metallo-dependent hydrolases superfamily. Adenine deaminase family. It depends on Mn(2+) as a cofactor.

The enzyme catalyses adenine + H2O + H(+) = hypoxanthine + NH4(+). The sequence is that of Adenine deaminase from Desulforamulus reducens (strain ATCC BAA-1160 / DSM 100696 / MI-1) (Desulfotomaculum reducens).